Consider the following 162-residue polypeptide: Cadmium metallothionein (162 aa).

Positions 1-2 (MD) are excised as a propeptide.

In terms of biological role, the metallothioneins are involved in the cellular sequestration of toxic metal ions. The sequence is that of Cadmium metallothionein (MTT1) from Tetrahymena thermophila.